The chain runs to 73 residues: uncharacterized protein (73 aa).

This is an uncharacterized protein from Human cytomegalovirus (strain AD169) (HHV-5).